The sequence spans 162 residues: Nitrogen regulatory protein (162 aa).

The 145-residue stretch at Asn-12–Ala-156 folds into the PTS EIIA type-2 domain. The Tele-phosphohistidine intermediate role is filled by His-73.

The protein resides in the cytoplasm. Its function is as follows. Seems to have a role in regulating nitrogen assimilation. This chain is Nitrogen regulatory protein (ptsN), found in Klebsiella oxytoca.